The primary structure comprises 464 residues: ATP synthase subunit beta (464 aa).

ATP is bound at residue 150 to 157 (GGAGVGKT).

It belongs to the ATPase alpha/beta chains family. In terms of assembly, F-type ATPases have 2 components, CF(1) - the catalytic core - and CF(0) - the membrane proton channel. CF(1) has five subunits: alpha(3), beta(3), gamma(1), delta(1), epsilon(1). CF(0) has three main subunits: a(1), b(2) and c(9-12). The alpha and beta chains form an alternating ring which encloses part of the gamma chain. CF(1) is attached to CF(0) by a central stalk formed by the gamma and epsilon chains, while a peripheral stalk is formed by the delta and b chains.

The protein localises to the cell membrane. It carries out the reaction ATP + H2O + 4 H(+)(in) = ADP + phosphate + 5 H(+)(out). Functionally, produces ATP from ADP in the presence of a proton gradient across the membrane. The catalytic sites are hosted primarily by the beta subunits. This chain is ATP synthase subunit beta, found in Dehalococcoides mccartyi (strain ATCC BAA-2266 / KCTC 15142 / 195) (Dehalococcoides ethenogenes (strain 195)).